The primary structure comprises 356 residues: Sporulation minus regulator 1 (356 aa).

A DNA-binding region spans residues 183 to 199; it reads HPLRQLPGNPWHKFFGN.

This sequence to N.crassa mta-2.

Its subcellular location is the nucleus. Transcriptional activator that is required for post-fertilization events. It is required for the developmental events that occur in the female organ after fertilization. The sequence is that of Sporulation minus regulator 1 (SMR1) from Podospora anserina (Pleurage anserina).